A 152-amino-acid polypeptide reads, in one-letter code: MAKMHTRTKGKSGSTKPIRSESPAWSTATTEEITKVVLDLWKQGNSTSVIGMVLRDNYGVPDVKLATGKKVTEILRDNSEEPNVPEDLYNLIVKAIGLRKHLVVNNKDVHNKRSLQSAESKIRRLVKYYQSTKVLPIDWKYKPETAEMLITR.

Basic residues predominate over residues methionine 1–glycine 10. Residues methionine 1–serine 26 form a disordered region. The segment covering lysine 11 to serine 26 has biased composition (polar residues).

This sequence belongs to the universal ribosomal protein uS15 family. In terms of assembly, part of the 30S ribosomal subunit.

This chain is Small ribosomal subunit protein uS15, found in Methanococcoides burtonii (strain DSM 6242 / NBRC 107633 / OCM 468 / ACE-M).